Consider the following 308-residue polypeptide: Glutaminase (308 aa).

Substrate contacts are provided by Ser-66, Asn-117, Glu-161, Asn-168, Tyr-192, Tyr-244, and Val-262.

The protein belongs to the glutaminase family. In terms of assembly, homotetramer.

It catalyses the reaction L-glutamine + H2O = L-glutamate + NH4(+). The polypeptide is Glutaminase (Salmonella dublin (strain CT_02021853)).